The sequence spans 105 residues: Small ribosomal subunit protein uS10 (105 aa).

The protein belongs to the universal ribosomal protein uS10 family. In terms of assembly, part of the 30S ribosomal subunit.

Its function is as follows. Involved in the binding of tRNA to the ribosomes. The sequence is that of Small ribosomal subunit protein uS10 from Trichormus variabilis (strain ATCC 29413 / PCC 7937) (Anabaena variabilis).